The primary structure comprises 1100 residues: ATP-dependent DNA helicase mph1 (1100 aa).

A compositionally biased stretch (acidic residues) spans 1 to 21 (MSDSDDYLQDDPDDQAFDDFA). The disordered stretch occupies residues 1 to 250 (MSDSDDYLQD…RPSSFMQSSN (250 aa)). A compositionally biased stretch (low complexity) spans 38 to 61 (RNQTRNTTSRRNEDNSVASDSDSF). Over residues 84-94 (FADHPENEASS) the composition is skewed to basic and acidic residues. Residues 104–117 (NNPQENIFVTQLTQ) show a composition bias toward polar residues. Residues 135–146 (PPPPPPPAPTKP) show a composition bias toward pro residues. Polar residues-rich tracts occupy residues 182 to 191 (RLSFSTAQNS) and 200 to 209 (NAPTNTAQTE). Positions 212–223 (DFLDDIPDDAFD) are enriched in acidic residues. Residues 237-249 (SNSSRPSSFMQSS) show a composition bias toward low complexity. The Helicase ATP-binding domain occupies 317-485 (ITQKGLFHNL…AVIDGLEISK (169 aa)). 330–337 (LPTGLGKT) provides a ligand contact to ATP. A DEAH box motif is present at residues 433–436 (DEAH). The region spanning 655-829 (YLKQVVLNHF…GTRFTFHDDK (175 aa)) is the Helicase C-terminal domain. Disordered stretches follow at residues 850–913 (PEEN…PEPV) and 1003–1100 (RRPA…LGRR). 2 stretches are compositionally biased toward basic residues: residues 863-875 (RRGR…PKKF) and 1019-1028 (GNKKRLRKGR). The span at 1053 to 1066 (QPISPEQLLSSFTD) shows a compositional bias: polar residues. Residues 1082–1092 (LELDADFEAPD) show a composition bias toward acidic residues.

Belongs to the DEAD box helicase family. DEAH subfamily. FANCM sub-subfamily. As to quaternary structure, interacts with the MHF histone-fold complex to form the FANCM-MHF complex.

The protein resides in the nucleus. It carries out the reaction ATP + H2O = ADP + phosphate + H(+). Its function is as follows. ATP-dependent DNA helicase involved in DNA damage repair by homologous recombination and in genome maintenance. Capable of unwinding D-loops. Plays a role in limiting crossover recombinants during mitotic DNA double-strand break (DSB) repair. Component of a FANCM-MHF complex which promotes gene conversion at blocked replication forks, probably by reversal of the stalled fork. The chain is ATP-dependent DNA helicase mph1 from Aspergillus terreus (strain NIH 2624 / FGSC A1156).